The chain runs to 367 residues: Nociceptin receptor (367 aa).

The Extracellular portion of the chain corresponds to Met-1 to Leu-45. N-linked (GlcNAc...) asparagine glycans are attached at residues Asn-21, Asn-26, and Asn-36. The chain crosses the membrane as a helical span at residues Gly-46 to Tyr-71. The Cytoplasmic portion of the chain corresponds to Val-72–Asn-84. The helical transmembrane segment at Ile-85–Thr-106 threads the bilayer. Topologically, residues Asp-107–Lys-121 are extracellular. Residues Cys-120 and Cys-197 are joined by a disulfide bond. The helical transmembrane segment at Thr-122 to Val-143 threads the bilayer. Residues Asp-144 to Ser-162 lie on the Cytoplasmic side of the membrane. The helical transmembrane segment at Lys-163–Met-185 threads the bilayer. The Extracellular segment spans residues Gly-186–Trp-208. The helical transmembrane segment at Gly-209–Ser-233 threads the bilayer. Topologically, residues Leu-234–Leu-261 are cytoplasmic. The helical transmembrane segment at Val-262–Val-282 threads the bilayer. Over Gln-283–Ile-297 the chain is Extracellular. Residues Leu-298 to Leu-319 form a helical membrane-spanning segment. Over Asp-320 to Ala-367 the chain is Cytoplasmic. The S-palmitoyl cysteine moiety is linked to residue Cys-331.

Belongs to the G-protein coupled receptor 1 family. Phosphorylation at Ser-360 requires GRK3. In terms of tissue distribution, highly expressed in several brain areas, the intestine, liver and spleen. Detected in sympathetic stellate ganglion neurons.

Its subcellular location is the cell membrane. It localises to the cytoplasmic vesicle. G-protein coupled opioid receptor that functions as a receptor for the endogenous neuropeptide nociceptin. Ligand binding causes a conformation change that triggers signaling via guanine nucleotide-binding proteins (G proteins) and modulates the activity of down-stream effectors. Signaling via G proteins mediates inhibition of adenylate cyclase activity and calcium channel activity. Arrestins modulate signaling via G proteins and mediate the activation of alternative signaling pathways that lead to the activation of MAP kinases. Plays a role in modulating nociception and the perception of pain. Plays a role in the regulation of locomotor activity by the neuropeptide nociceptin. This is Nociceptin receptor (Oprl1) from Rattus norvegicus (Rat).